A 118-amino-acid chain; its full sequence is NADH-ubiquinone oxidoreductase chain 3 (118 aa).

Helical transmembrane passes span 9-29 (IYLVISLLVCLIPLGVPFLFA), 62-82 (LVSILFIIFDLEVTFFFPWAV), and 87-107 (IDLFGFWSMMVFLLILTIGFL).

It belongs to the complex I subunit 3 family.

It is found in the mitochondrion membrane. It carries out the reaction a ubiquinone + NADH + 5 H(+)(in) = a ubiquinol + NAD(+) + 4 H(+)(out). Core subunit of the mitochondrial membrane respiratory chain NADH dehydrogenase (Complex I) that is believed to belong to the minimal assembly required for catalysis. Complex I functions in the transfer of electrons from NADH to the respiratory chain. The immediate electron acceptor for the enzyme is believed to be ubiquinone. The sequence is that of NADH-ubiquinone oxidoreductase chain 3 (NAD3) from Pinus sylvestris (Scotch pine).